We begin with the raw amino-acid sequence, 107 residues long: Integration host factor subunit beta (107 aa).

A disordered region spans residues 76-107; sequence FVPHFKPGKELRERVDGRAGEPLKADDPDDDR. The segment covering 82-101 has biased composition (basic and acidic residues); that stretch reads PGKELRERVDGRAGEPLKAD.

Belongs to the bacterial histone-like protein family. Heterodimer of an alpha and a beta chain.

Functionally, this protein is one of the two subunits of integration host factor, a specific DNA-binding protein that functions in genetic recombination as well as in transcriptional and translational control. This is Integration host factor subunit beta from Burkholderia cenocepacia (strain HI2424).